A 330-amino-acid polypeptide reads, in one-letter code: Ferredoxin--NADP reductase (330 aa).

FAD contacts are provided by Glu-35, Gln-43, Tyr-48, Val-90, Phe-123, Asp-285, and Thr-326.

The protein belongs to the ferredoxin--NADP reductase type 2 family. Homodimer. Requires FAD as cofactor.

It carries out the reaction 2 reduced [2Fe-2S]-[ferredoxin] + NADP(+) + H(+) = 2 oxidized [2Fe-2S]-[ferredoxin] + NADPH. The protein is Ferredoxin--NADP reductase of Streptococcus pyogenes serotype M2 (strain MGAS10270).